The primary structure comprises 1232 residues: MANGVIPPPGGASPLPQVRVPLEEPPLSPDVEEEDDDLGKTLAVSRFGDLISKPPAWDPEKPSRSYSERDFEFHRHTSHHTHHPLSARLPPPHKLRRLPPTSGRHTRRKRKKEKTSVPPSEGTPPIQEEGGAGVDEEEEEEEEEEGESEAEPVEPPPSGSPPKAKFSIGSDEDDSPGLPGRAAVTKPLPSVGPRTDKSPQHSGSFPSPRARASRLAGEKSRPWSPSASYDLRERLCPGSALGNPGGPEQQVPTDEAEAQMLGSADLDDMKSHRLEDNPGVRRHLVKKPSRTQGGRGSPSGLAPILRRKKKKKKLDRRPHEVFVELNELMLDRSQEPHWRETARWIKFEEDVEEETERWGKPHVASLSFRSLLELRRTIAHGAALLDLEQTTLPGIAHLVVETMIVSDQIRPEDRASVLRTLLLKHSHPNDDKDSGFFPRNPSSSSMNSVLGNHHPTPSHGPDGAVPTMADDLGEPAPLWPHDPDAKEKPLHMPGGDSHRGKSLKLLEKIPEDAEATVVLVGCVPFLEQPAAAFVRLNEAVLLESVLEVPVPVRFLFVMLGPSHTSTDYHELGRSIATLMSDKLFHEAAYQADDRQDLLSAISEFLDGSIVIPPSEVEGRDLLRSVAAFQRELLRKRREREQTKVEMTTRGGYTAPGKELSLELGGSEATPEDDPLLRTGSIFGGLVRDVRRRYPYYPSDLRDALHSQCVAAVLFIYFAALSPAITFGGLLGEKTEGLMGVSELIVSTAVLGVLFSLLGAQPLLVVGFSGPLLVFEEAFFKFCRAQDLEYLTGRVWVGLWLVVFVLALVAAEGSFLVRYISPFTQEIFAFLISLIFIYETFYKLYKVFTEHPLLPFYPPEGALEGSLEAGLEPNGSALPPTEGPRGPRNQPNTALLSLILMLGTFFIAFFLRKFRNSRFLGGKARRIIGDFGIPISILVMVLVDYSITDTYTQKLTVPTGLSVTSPDKRSWFIPPLGSARPFPPWMMVAAAVPALLVLILIFMETQITALIVSQKARRLLKGSGFHLDLLLIGSLGGLCGLFGLPWLTAATVRSVTHVNALTVMRTAIAPGDKPQIQEVREQRVTGVLIASLVGLSIVMGAVLRRIPLAVLFGIFLYMGVTSLSGIQLSQRLLLILMPAKHHPEQPYVTKVKTWRMHLFTCIQLGCIALLWVVKSTAASLAFPFLLLLTVPLRHCLLPRLFQDRELQALDSEDAEPNFDEDGQDEYNELHMPV.

Pro residues predominate over residues methionine 1–glycine 11. 2 disordered regions span residues methionine 1–arginine 316 and asparagine 429–arginine 499. The Cytoplasmic portion of the chain corresponds to methionine 1 to cysteine 708. The span at aspartate 58 to arginine 75 shows a compositional bias: basic and acidic residues. Basic residues-rich tracts occupy residues histidine 76–arginine 97 and arginine 104–glutamate 113. A compositionally biased stretch (acidic residues) spans valine 134–proline 152. Serine 167, serine 170, serine 175, and serine 198 each carry phosphoserine. Residues aspartate 267–glycine 279 show a composition bias toward basic and acidic residues. Residues valine 280–serine 289 show a composition bias toward basic residues. An Omega-N-methylarginine modification is found at arginine 295. Positions leucine 305–arginine 316 are enriched in basic residues. Over residues asparagine 440–leucine 450 the composition is skewed to polar residues. Basic and acidic residues predominate over residues histidine 481–arginine 499. The next 5 helical transmembrane spans lie at valine 709–glycine 731, leucine 737–phenylalanine 774, valine 794–valine 816, isoleucine 826–phenylalanine 847, and alanine 893–leucine 910. The interval valine 709–valine 1232 is membrane (anion exchange). Over arginine 911–arginine 925 the chain is Cytoplasmic. The next 5 helical transmembrane spans lie at isoleucine 926–isoleucine 946, proline 980–methionine 1002, leucine 1028–alanine 1049, valine 1083–serine 1128, and methionine 1155–leucine 1191. The S-palmitoyl cysteine moiety is linked to residue cysteine 1165.

The protein belongs to the anion exchanger (TC 2.A.31) family.

The protein localises to the cell membrane. The enzyme catalyses hydrogencarbonate(in) + chloride(out) = hydrogencarbonate(out) + chloride(in). Its function is as follows. Sodium-independent anion exchanger which mediates the electroneutral exchange of chloride for bicarbonate ions across the cell membrane. May be involved in the regulation of intracellular pH, and the modulation of cardiac action potential. The protein is Anion exchange protein 3 (SLC4A3) of Plecturocebus moloch (Dusky titi monkey).